A 607-amino-acid polypeptide reads, in one-letter code: Coronin-like protein cor-1 (607 aa).

WD repeat units lie at residues 77–117 (AHKA…LNRN), 127–167 (GHQK…ALLE), and 170–209 (GHPD…VVHE). A disordered region spans residues 415–564 (PTAAESVPTQ…VSAASDVGHV (150 aa)). Over residues 424-436 (QSYSERPPSSQQP) the composition is skewed to low complexity. A compositionally biased stretch (pro residues) spans 437-447 (SPRPSASPRPR). Basic and acidic residues-rich tracts occupy residues 473 to 489 (SRTE…DPMK) and 517 to 533 (AAAE…RTAD). Positions 544–559 (SSRASASPRGSVSAAS) are enriched in low complexity. Positions 563 to 602 (HVPQNMDELLEDLMKMKAVLRQHERRIRMLEEEIADRNMS) form a coiled coil.

Belongs to the WD repeat coronin family.

Its subcellular location is the cytoplasm. It localises to the cytoskeleton. Required to direct the migration of Q neuroblasts along the anterior axis of the body during larval development. This is dependent on its asymmetric expression in Q neuroblasts. The sequence is that of Coronin-like protein cor-1 (cor-1) from Caenorhabditis elegans.